Reading from the N-terminus, the 675-residue chain is Pesticidal crystal protein Cry10Aa (675 aa).

It belongs to the delta endotoxin family.

Promotes colloidosmotic lysis by binding to the midgut epithelial cells of mosquitos. Active on Aedes aegypti. The polypeptide is Pesticidal crystal protein Cry10Aa (cry10Aa) (Bacillus thuringiensis subsp. israelensis).